The following is a 446-amino-acid chain: N-succinylarginine dihydrolase (446 aa).

Substrate is bound by residues 19-28 (AGLSFGNVAS), N110, and 137-138 (HR). E174 is an active-site residue. R213 lines the substrate pocket. H249 is an active-site residue. 2 residues coordinate substrate: D251 and N364. Residue C370 is the Nucleophile of the active site.

The protein belongs to the succinylarginine dihydrolase family. In terms of assembly, homodimer.

The enzyme catalyses N(2)-succinyl-L-arginine + 2 H2O + 2 H(+) = N(2)-succinyl-L-ornithine + 2 NH4(+) + CO2. It functions in the pathway amino-acid degradation; L-arginine degradation via AST pathway; L-glutamate and succinate from L-arginine: step 2/5. In terms of biological role, catalyzes the hydrolysis of N(2)-succinylarginine into N(2)-succinylornithine, ammonia and CO(2). This is N-succinylarginine dihydrolase from Burkholderia orbicola (strain MC0-3).